The following is a 275-amino-acid chain: MSNYLIGDVHGCFDELKALLAKVNFDKEKDTLWLTGDLISRGPQSLKVLRYARSLGKALRMVLGNHDLHLLAIHAGMRKNNPKDHLTSLLAAPDVDQLMDWLRQQPLLQIDDDLKLIMTHAGIYPKWDKKTAQTCAQEIEVALRGNRLPLFLDRSHTQTPHSWSPKLKGDARLQFITNALTRMRYCFSDGSLDMTHKEIPEKVQDDLYPWFLLPRLLEPEYAITFGHWSALKGKGTPKNIYALDTGCCWGNELTLLHWEEKRYFIQPAYKCENEF.

The protein belongs to the Ap4A hydrolase family.

The catalysed reaction is P(1),P(4)-bis(5'-adenosyl) tetraphosphate + H2O = 2 ADP + 2 H(+). Its function is as follows. Hydrolyzes diadenosine 5',5'''-P1,P4-tetraphosphate to yield ADP. This Hamiltonella defensa subsp. Acyrthosiphon pisum (strain 5AT) protein is Bis(5'-nucleosyl)-tetraphosphatase, symmetrical.